The following is a 245-amino-acid chain: Nicotinamide/nicotinic acid mononucleotide adenylyltransferase 3 (245 aa).

Residues S14 and F15 each contribute to the NAD(+) site. ATP is bound by residues H22 and K56. NAD(+)-binding residues include W90, T93, G134, and D136. K139 lines the ATP pocket. NAD(+) is bound by residues L146, W147, R166, and N197. 202 to 205 (TYVR) serves as a coordination point for ATP.

Belongs to the eukaryotic NMN adenylyltransferase family. In terms of assembly, homotetramer. It depends on Mg(2+) as a cofactor.

It localises to the mitochondrion. The enzyme catalyses beta-nicotinamide D-ribonucleotide + ATP + H(+) = diphosphate + NAD(+). The catalysed reaction is nicotinate beta-D-ribonucleotide + ATP + H(+) = deamido-NAD(+) + diphosphate. The protein operates within cofactor biosynthesis; NAD(+) biosynthesis; NAD(+) from nicotinamide D-ribonucleotide: step 1/1. It participates in cofactor biosynthesis; NAD(+) biosynthesis; deamido-NAD(+) from nicotinate D-ribonucleotide: step 1/1. Its activity is regulated as follows. Activity is strongly inhibited by galotannin. Inhibited by P1-(adenosine-5')-P4-(nicotinic-acid-riboside-5')-tetraphosphate (Nap4AD). Functionally, catalyzes the formation of NAD(+) from nicotinamide mononucleotide (NMN) and ATP. Can also use the deamidated form; nicotinic acid mononucleotide (NaMN) as substrate with the same efficiency. Can use triazofurin monophosphate (TrMP) as substrate. Can also use GTP and ITP as nucleotide donors. Also catalyzes the reverse reaction, i.e. the pyrophosphorolytic cleavage of NAD(+). For the pyrophosphorolytic activity, can use NAD(+), NADH, NaAD, nicotinic acid adenine dinucleotide phosphate (NHD), nicotinamide guanine dinucleotide (NGD) as substrates. Fails to cleave phosphorylated dinucleotides NADP(+), NADPH and NaADP(+). Protects against axonal degeneration following injury. May be involved in the maintenance of axonal integrity. Also functions as a stress-response chaperone protein that prevents toxic aggregation of proteins; this function may be independent of its NAD(+) synthesis activity. The sequence is that of Nicotinamide/nicotinic acid mononucleotide adenylyltransferase 3 from Mus musculus (Mouse).